A 69-amino-acid polypeptide reads, in one-letter code: Large ribosomal subunit protein uL29 (69 aa).

It belongs to the universal ribosomal protein uL29 family.

The protein is Large ribosomal subunit protein uL29 of Thermoanaerobacter pseudethanolicus (strain ATCC 33223 / 39E) (Clostridium thermohydrosulfuricum).